The primary structure comprises 269 residues: 4-hydroxy-4-methyl-2-oxoglutarate aldolase cghB (269 aa).

His48 (proton acceptor) is an active-site residue. The a divalent metal cation site is built by Glu155 and Asp181. Asp181 contacts substrate.

Belongs to the HpcH/HpaI aldolase family. In terms of assembly, homohexamer; trimer of dimers. Requires Co(2+) as cofactor. The cofactor is Mn(2+). Zn(2+) is required as a cofactor. Fe(2+) serves as cofactor. It depends on Mg(2+) as a cofactor.

The catalysed reaction is 4-hydroxy-4-methyl-2-oxoglutarate = 2 pyruvate. It functions in the pathway secondary metabolite biosynthesis. In terms of biological role, 4-hydroxy-4-methyl-2-oxoglutarate aldolase; part of the gene cluster that mediates the biosynthesis of the tetramic acid Sch210972, a potential anti-HIV fungal natural product that contains a decalin core. The PKS module of cghG together with the enoylreductase cghC catalyze the formation of the polyketide unit which is then conjugated to 4-hydroxyl-4-methyl glutamate (HMG) by the condensation domain of the cghG NRPS module. One unique structural feature of Sch210972 is the tetramic acid motif proposed to be derived from the non-proteinogenic amino acid HMG, by a Dieckmann-type condensation catalyzed by the reductase domain of cghG. The aldolase cghB catalyzes the aldol condensation of 2 molecules of pyruvic acid to yield the intermediate 4-hydroxyl-4-methyl-2-oxoglutarate (HMOG), which can then be stereoselectively transaminated by an unidentified enzyme to form HMG. The Diels-Alderase cghA then uses the Dieckmann product released by cghG as substrate and catalyzes the Diels-Alder cycloaddition to form the decalin ring of Sch210972. CghA also suppresses the nonenzymatic formation of the alternative stereoisomer. In Chaetomium globosum (strain ATCC 6205 / CBS 148.51 / DSM 1962 / NBRC 6347 / NRRL 1970) (Soil fungus), this protein is 4-hydroxy-4-methyl-2-oxoglutarate aldolase cghB.